A 139-amino-acid chain; its full sequence is Transcription antitermination protein NusB (139 aa).

This sequence belongs to the NusB family.

Functionally, involved in transcription antitermination. Required for transcription of ribosomal RNA (rRNA) genes. Binds specifically to the boxA antiterminator sequence of the ribosomal RNA (rrn) operons. This is Transcription antitermination protein NusB from Lactiplantibacillus plantarum (strain ATCC BAA-793 / NCIMB 8826 / WCFS1) (Lactobacillus plantarum).